The sequence spans 214 residues: UPF0502 protein Pput_3252 (214 aa).

It belongs to the UPF0502 family.

This Pseudomonas putida (strain ATCC 700007 / DSM 6899 / JCM 31910 / BCRC 17059 / LMG 24140 / F1) protein is UPF0502 protein Pput_3252.